Consider the following 213-residue polypeptide: tRNA (guanine-N(7)-)-methyltransferase (213 aa).

Residues E44, E69, D96, and D118 each contribute to the S-adenosyl-L-methionine site. The active site involves D118. Substrate-binding positions include K122, D154, and 191-194 (TEYE).

The protein belongs to the class I-like SAM-binding methyltransferase superfamily. TrmB family.

It catalyses the reaction guanosine(46) in tRNA + S-adenosyl-L-methionine = N(7)-methylguanosine(46) in tRNA + S-adenosyl-L-homocysteine. The protein operates within tRNA modification; N(7)-methylguanine-tRNA biosynthesis. Functionally, catalyzes the formation of N(7)-methylguanine at position 46 (m7G46) in tRNA. The chain is tRNA (guanine-N(7)-)-methyltransferase from Exiguobacterium sibiricum (strain DSM 17290 / CCUG 55495 / CIP 109462 / JCM 13490 / 255-15).